The following is a 330-amino-acid chain: Diacylglycerol acyltransferase/mycolyltransferase Ag85B (330 aa).

Residues 1–40 (MTDLSEKVRAWGRRLVVGAAAAATLPGLIGIAGGAATANA) form the signal peptide. 82-83 (LR) provides a ligand contact to substrate. Positions 98-108 (FEWYYQSGLSV) are fibronectin-binding. Cysteine 127 and cysteine 132 are oxidised to a cystine. The substrate site is built by serine 166 and aspartate 194. Residue serine 166 is the Nucleophile of the active site. Glutamate 270 is an active-site residue. Residues 272–275 (FVRS), lysine 279, and 302–304 (HSW) contribute to the substrate site. Histidine 302 is a catalytic residue.

Belongs to the mycobacterial A85 antigen family.

It localises to the secreted. It catalyses the reaction 2 alpha,alpha'-trehalose 6-mycolate = alpha,alpha'-trehalose 6,6'-bismycolate + alpha,alpha-trehalose. The catalysed reaction is an acyl-CoA + a 1,2-diacyl-sn-glycerol = a triacyl-sn-glycerol + CoA. In terms of biological role, the antigen 85 proteins (FbpA, FbpB, FbpC) are responsible for the high affinity of mycobacteria for fibronectin, a large adhesive glycoprotein, which facilitates the attachment of M.tuberculosis to murine alveolar macrophages (AMs). They also help to maintain the integrity of the cell wall by catalyzing the transfer of mycolic acids to cell wall arabinogalactan and through the synthesis of alpha,alpha-trehalose dimycolate (TDM, cord factor). They catalyze the transfer of a mycoloyl residue from one molecule of alpha,alpha-trehalose monomycolate (TMM) to another TMM, leading to the formation of TDM. In Mycobacterium intracellulare (strain ATCC 13950 / DSM 43223 / JCM 6384 / NCTC 13025 / 3600), this protein is Diacylglycerol acyltransferase/mycolyltransferase Ag85B (fbpB).